Reading from the N-terminus, the 272-residue chain is Protein UL24 homolog (272 aa).

This sequence belongs to the herpesviridae UL24 family.

It is found in the virion. The protein resides in the host cytoplasm. It localises to the host nucleus. Its subcellular location is the host nucleolus. The protein localises to the host Golgi apparatus. In terms of biological role, may participate in nuclear egress of viral particles. Plays a role in the dispersal of several host nucleolar proteins including NCL/nucleolin and NPM1. Since deletion of host NCL/nucleolin negatively impact on nuclear egress, UL24 supposedly acts on this process through its effect on host nucleoli. This chain is Protein UL24 homolog, found in Equine herpesvirus 1 (strain V592) (EHV-1).